A 203-amino-acid polypeptide reads, in one-letter code: Ribosomal RNA small subunit methyltransferase G (203 aa).

S-adenosyl-L-methionine is bound by residues glycine 73, leucine 78, valine 124–glutamate 125, and arginine 138.

The protein belongs to the methyltransferase superfamily. RNA methyltransferase RsmG family.

The protein localises to the cytoplasm. The enzyme catalyses guanosine(527) in 16S rRNA + S-adenosyl-L-methionine = N(7)-methylguanosine(527) in 16S rRNA + S-adenosyl-L-homocysteine. In terms of biological role, specifically methylates the N7 position of guanine in position 527 of 16S rRNA. The sequence is that of Ribosomal RNA small subunit methyltransferase G from Glaesserella parasuis serovar 5 (strain SH0165) (Haemophilus parasuis).